The following is a 280-amino-acid chain: F420-dependent methylenetetrahydromethanopterin dehydrogenase (280 aa).

This sequence belongs to the MTD family.

The catalysed reaction is 5,10-methylenetetrahydromethanopterin + oxidized coenzyme F420-(gamma-L-Glu)(n) + 2 H(+) = 5,10-methenyl-5,6,7,8-tetrahydromethanopterin + reduced coenzyme F420-(gamma-L-Glu)(n). It functions in the pathway one-carbon metabolism; methanogenesis from CO(2); 5,10-methylene-5,6,7,8-tetrahydromethanopterin from 5,10-methenyl-5,6,7,8-tetrahydromethanopterin (coenzyme F420 route): step 1/1. Its function is as follows. Catalyzes the reversible reduction of methenyl-H(4)MPT(+) to methylene-H(4)MPT. This is F420-dependent methylenetetrahydromethanopterin dehydrogenase from Methanoculleus marisnigri (strain ATCC 35101 / DSM 1498 / JR1).